Here is a 310-residue protein sequence, read N- to C-terminus: Malate dehydrogenase (310 aa).

Residues 7 to 12 and D32 contribute to the NAD(+) site; that span reads GAGNVG. Positions 81 and 87 each coordinate substrate. NAD(+) is bound by residues N94 and 117–119; that span reads VSN. Substrate is bound by residues N119 and R150. H174 (proton acceptor) is an active-site residue.

The protein belongs to the LDH/MDH superfamily. MDH type 3 family.

It carries out the reaction (S)-malate + NAD(+) = oxaloacetate + NADH + H(+). Functionally, catalyzes the reversible oxidation of malate to oxaloacetate. The polypeptide is Malate dehydrogenase (Pelodictyon phaeoclathratiforme (strain DSM 5477 / BU-1)).